The following is a 718-amino-acid chain: Kinesin-like protein KIF2C (718 aa).

Residues 1 to 248 (MESLPARLFP…CHPLTLTDPT (248 aa)) are globular. Phosphoserine occurs at positions 3 and 19. Residues 86–111 (PKQKRRSVNSKIPAPKEGLRSRSTRM) are disordered. Ser92 carries the phosphoserine; by AURKB modification. Residues 95–98 (SKIP) carry the Microtubule tip localization signal motif. Ser106, Ser108, Ser112, Ser163, and Ser186 each carry phosphoserine. The segment at 201 to 232 (EKRAQNSEIRIKRAQEYDSSFPNWEFARMIKE) is negative regulator of microtubule-binding. Residues 252–582 (RICVCVRKRP…LRYADRVKEL (331 aa)) form the Kinesin motor domain. ATP is bound by residues Arg258 and 342-349 (GQTGSGKT). The Nuclear localization signal motif lies at 409–412 (KKAK). Residues Ser513 and Ser626 each carry the phosphoserine modification. 2 coiled-coil regions span residues 613–651 (NFKE…IIQQ) and 689–716 (ALRE…SKKR).

It belongs to the TRAFAC class myosin-kinesin ATPase superfamily. Kinesin family. MCAK/KIF2 subfamily. Interacts with CENPH. Interacts with MTUS2/TIP150; the interaction is direct. Interacts with MAPRE1; the interaction is direct, regulated by phosphorylation and is probably required for targeting to growing microtubule plus ends. Interacts with KIF18B at microtubule tips; this interaction increases the affinity of both partners for microtubule plus ends and is required for robust microtubule depolymerization. Phosphorylation by AURKA or AURKB strongly reduces KIF18B-binding. Post-translationally, phosphorylation by AURKB, regulates association with centromeres and kinetochores and the microtubule depolymerization activity. Ubiquitinated.

Its subcellular location is the cytoplasm. It localises to the cytoskeleton. The protein localises to the nucleus. The protein resides in the chromosome. It is found in the centromere. Its subcellular location is the kinetochore. In complex with KIF18B, constitutes the major microtubule plus-end depolymerizing activity in mitotic cells. Regulates the turnover of microtubules at the kinetochore and functions in chromosome segregation during mitosis. Plays a role in chromosome congression and is required for the lateral to end-on conversion of the chromosome-microtubule attachment. In Cricetulus griseus (Chinese hamster), this protein is Kinesin-like protein KIF2C (KIF2C).